Consider the following 351-residue polypeptide: Probable V-type proton ATPase subunit d (351 aa).

It belongs to the V-ATPase V0D/AC39 subunit family. V-ATPase is a heteromultimeric enzyme composed of a peripheral catalytic V1 complex (components A to H) attached to an integral membrane V0 proton pore complex (components: a, c, c', c'' and d).

Subunit of the integral membrane V0 complex of vacuolar ATPase. Vacuolar ATPase is responsible for acidifying a variety of intracellular compartments in eukaryotic cells, thus providing most of the energy required for transport processes in the vacuolar system. This is Probable V-type proton ATPase subunit d from Oryza sativa subsp. japonica (Rice).